Reading from the N-terminus, the 885-residue chain is DNA mismatch repair protein MutS (885 aa).

The segment at 1-67 (MAPGEQQLSL…SNNDDEGLPR (67 aa)) is disordered. Residues 26 to 36 (SEDKTEESERP) show a composition bias toward basic and acidic residues. 691 to 698 (GPNASGKS) lines the ATP pocket.

Belongs to the DNA mismatch repair MutS family.

Its function is as follows. This protein is involved in the repair of mismatches in DNA. It is possible that it carries out the mismatch recognition step. This protein has a weak ATPase activity. The polypeptide is DNA mismatch repair protein MutS (Synechococcus sp. (strain RCC307)).